Here is a 273-residue protein sequence, read N- to C-terminus: Type III pantothenate kinase (273 aa).

5-12 (DVGNSHVV) is a binding site for ATP. 112–115 (GTDL) lines the substrate pocket. The Proton acceptor role is filled by D114. D134 is a K(+) binding site. Position 137 (T137) interacts with ATP. A substrate-binding site is contributed by T189.

The protein belongs to the type III pantothenate kinase family. In terms of assembly, homodimer. It depends on NH4(+) as a cofactor. The cofactor is K(+).

It is found in the cytoplasm. The enzyme catalyses (R)-pantothenate + ATP = (R)-4'-phosphopantothenate + ADP + H(+). Its pathway is cofactor biosynthesis; coenzyme A biosynthesis; CoA from (R)-pantothenate: step 1/5. Catalyzes the phosphorylation of pantothenate (Pan), the first step in CoA biosynthesis. This Treponema pallidum (strain Nichols) protein is Type III pantothenate kinase.